Reading from the N-terminus, the 242-residue chain is Placenta-expressed transcript 1 protein (242 aa).

Positions 1 to 26 (MAILRSLLLPLGLLLCLWLLCSPASC) are cleaved as a signal peptide. Residues 27-220 (TNSTTNCKPF…TTHKSSANRA (194 aa)) are Extracellular-facing. N-linked (GlcNAc...) asparagine glycosylation is found at N28, N81, and N106. The interval 162–209 (VITTPTHKPTPAPPKPTTNPQKTTTNHSIPTTSLPKPTTSLYTSHPKL) is disordered. A compositionally biased stretch (pro residues) spans 169-178 (KPTPAPPKPT). Over residues 179–205 (TNPQKTTTNHSIPTTSLPKPTTSLYTS) the composition is skewed to low complexity. The chain crosses the membrane as a helical span at residues 221–241 (FLCPVREAIQILFIFLIGTLL). Position 242 (F242) is a topological domain, cytoplasmic.

Post-translationally, N-glycosylated.

It is found in the membrane. It localises to the apical cell membrane. In terms of biological role, modulates leading keratinocyte migration and cellular adhesion to matrix proteins during a wound-healing response and promotes wound repair. May play a role during trichilemmal differentiation of the hair follicle. The chain is Placenta-expressed transcript 1 protein (PLET1) from Bos taurus (Bovine).